Reading from the N-terminus, the 163-residue chain is D-aminoacyl-tRNA deacylase (163 aa).

The Gly-cisPro motif, important for rejection of L-amino acids motif lies at 141–142 (GP).

It belongs to the DTD family. As to quaternary structure, homodimer.

The protein localises to the cytoplasm. It carries out the reaction glycyl-tRNA(Ala) + H2O = tRNA(Ala) + glycine + H(+). The catalysed reaction is a D-aminoacyl-tRNA + H2O = a tRNA + a D-alpha-amino acid + H(+). In terms of biological role, an aminoacyl-tRNA editing enzyme that deacylates mischarged D-aminoacyl-tRNAs. Also deacylates mischarged glycyl-tRNA(Ala), protecting cells against glycine mischarging by AlaRS. Acts via tRNA-based rather than protein-based catalysis; rejects L-amino acids rather than detecting D-amino acids in the active site. By recycling D-aminoacyl-tRNA to D-amino acids and free tRNA molecules, this enzyme counteracts the toxicity associated with the formation of D-aminoacyl-tRNA entities in vivo and helps enforce protein L-homochirality. This Neisseria gonorrhoeae (strain ATCC 700825 / FA 1090) protein is D-aminoacyl-tRNA deacylase.